A 149-amino-acid chain; its full sequence is Transcriptional repressor NrdR (149 aa).

A zinc finger spans residues 3 to 34 (CPFCSTEETKVIDSRLVSEGYQVRRRRECGNC). The ATP-cone domain maps to 49–139 (PKVIKNDGTR…VYLSFDDINQ (91 aa)).

It belongs to the NrdR family. Requires Zn(2+) as cofactor.

In terms of biological role, negatively regulates transcription of bacterial ribonucleotide reductase nrd genes and operons by binding to NrdR-boxes. The protein is Transcriptional repressor NrdR of Pasteurella multocida (strain Pm70).